The chain runs to 579 residues: Protein downstream neighbor of son homolog (579 aa).

Disordered regions lie at residues 1–68 (MAEL…RRNP) and 331–379 (FSQP…DESF). Over residues 339-348 (DTGKKQKKPE) the composition is skewed to basic and acidic residues. A compositionally biased stretch (acidic residues) spans 365–378 (EADEASDESDEDES).

Belongs to the DONSON family. Component of the replisome complex.

It is found in the nucleus. In terms of biological role, replisome component that maintains genome stability by protecting stalled or damaged replication forks. After the induction of replication stress, required for the stabilization of stalled replication forks, the efficient activation of the intra-S-phase and G/2M cell-cycle checkpoints and the maintenance of genome stability. The protein is Protein downstream neighbor of son homolog of Xenopus laevis (African clawed frog).